A 306-amino-acid polypeptide reads, in one-letter code: Beta-lactamase (306 aa).

The signal sequence occupies residues 1 to 36; the sequence is MKLKTKASIKFGICVGLLCLSITGFTPFFNSTHAEA. The active-site Acyl-ester intermediate is the Ser89. 251–253 serves as a coordination point for substrate; that stretch reads KSG.

Belongs to the class-A beta-lactamase family.

Its subcellular location is the secreted. It carries out the reaction a beta-lactam + H2O = a substituted beta-amino acid. Its function is as follows. This protein is a beta-lactamase with a substrate specificity for penicillins. This Bacillus subtilis (strain 168) protein is Beta-lactamase (penP).